The primary structure comprises 102 residues: snRNA-activating protein complex subunit 5 (102 aa).

Over residues 73 to 82 (QTTLKLSTRS) the composition is skewed to polar residues. A disordered region spans residues 73–102 (QTTLKLSTRSPMEEEEEEEEEEEEEEESDS). The segment covering 85–102 (EEEEEEEEEEEEEEESDS) has biased composition (acidic residues).

In terms of assembly, part of the SNAPc complex composed of 5 subunits: SNAPC1, SNAPC2, SNAPC3, SNAPC4 and SNAPC5. SNAPC5 interacts with SNAPC4.

It localises to the nucleus. In terms of biological role, part of the SNAPc complex required for the transcription of both RNA polymerase II and III small-nuclear RNA genes. Binds to the proximal sequence element (PSE), a non-TATA-box basal promoter element common to these 2 types of genes. Recruits TBP and BRF2 to the U6 snRNA TATA box. The polypeptide is snRNA-activating protein complex subunit 5 (Mus musculus (Mouse)).